Consider the following 127-residue polypeptide: uncharacterized protein (127 aa).

Phosphothreonine is present on threonine 30. The tract at residues 51-75 (APTYEQVLYPPASQKKTSNSTSEES) is disordered. Serine 63 bears the Phosphoserine mark.

This is an uncharacterized protein from Mus musculus (Mouse).